The primary structure comprises 576 residues: DNA mismatch repair protein MutL (576 aa).

This sequence belongs to the DNA mismatch repair MutL/HexB family.

In terms of biological role, this protein is involved in the repair of mismatches in DNA. It is required for dam-dependent methyl-directed DNA mismatch repair. May act as a 'molecular matchmaker', a protein that promotes the formation of a stable complex between two or more DNA-binding proteins in an ATP-dependent manner without itself being part of a final effector complex. This chain is DNA mismatch repair protein MutL, found in Chlamydia trachomatis serovar L2 (strain ATCC VR-902B / DSM 19102 / 434/Bu).